The primary structure comprises 261 residues: Probable septum site-determining protein MinC (261 aa).

Belongs to the MinC family. In terms of assembly, interacts with MinD and FtsZ.

Cell division inhibitor that blocks the formation of polar Z ring septums. Rapidly oscillates between the poles of the cell to destabilize FtsZ filaments that have formed before they mature into polar Z rings. Prevents FtsZ polymerization. This Burkholderia cenocepacia (strain ATCC BAA-245 / DSM 16553 / LMG 16656 / NCTC 13227 / J2315 / CF5610) (Burkholderia cepacia (strain J2315)) protein is Probable septum site-determining protein MinC.